A 193-amino-acid polypeptide reads, in one-letter code: CD70 antigen (193 aa).

Residues 1-17 are Cytoplasmic-facing; it reads MPEEGSGCSVRRRPYGC. A helical; Signal-anchor for type II membrane protein transmembrane segment spans residues 18–38; that stretch reads VLRAALVPLVAGLVICLVVCI. Residues 39-193 lie on the Extracellular side of the membrane; it reads QRFAQAQQQL…TFFGVQWVRP (155 aa). The region spanning 56–191 is the THD domain; sequence DVAELQLNHT…DETFFGVQWV (136 aa). N-linked (GlcNAc...) asparagine glycosylation occurs at asparagine 63. 2 disulfides stabilise this stretch: cysteine 115–cysteine 151 and cysteine 133–cysteine 168. N-linked (GlcNAc...) asparagine glycosylation occurs at asparagine 170.

It belongs to the tumor necrosis factor family. As to quaternary structure, homotrimer. N-glycosylated.

The protein localises to the cell membrane. In terms of biological role, expressed at the plasma membrane of B cells, it is the ligand of the CD27 receptor which is specifically expressed at the surface of T cells. The CD70-CD27 signaling pathway mediates antigen-specific T cell activation and expansion which in turn provides immune surveillance of B cells. The chain is CD70 antigen from Homo sapiens (Human).